The following is a 40-amino-acid chain: Photosystem II reaction center protein J (40 aa).

Residues 10-30 form a helical membrane-spanning segment; sequence LWLVGTVAGTLVIGLLGVFFY.

This sequence belongs to the PsbJ family. As to quaternary structure, PSII is composed of 1 copy each of membrane proteins PsbA, PsbB, PsbC, PsbD, PsbE, PsbF, PsbH, PsbI, PsbJ, PsbK, PsbL, PsbM, PsbT, PsbX, PsbY, PsbZ, Psb30/Ycf12, at least 3 peripheral proteins of the oxygen-evolving complex and a large number of cofactors. It forms dimeric complexes.

Its subcellular location is the plastid. It is found in the chloroplast thylakoid membrane. In terms of biological role, one of the components of the core complex of photosystem II (PSII). PSII is a light-driven water:plastoquinone oxidoreductase that uses light energy to abstract electrons from H(2)O, generating O(2) and a proton gradient subsequently used for ATP formation. It consists of a core antenna complex that captures photons, and an electron transfer chain that converts photonic excitation into a charge separation. In Adiantum capillus-veneris (Maidenhair fern), this protein is Photosystem II reaction center protein J.